A 408-amino-acid polypeptide reads, in one-letter code: Phosphoglycerate kinase (408 aa).

Substrate contacts are provided by residues 24-26 (DLN), Arg40, 63-66 (HLGR), Arg122, and Arg166. ATP-binding positions include Lys216, Gly304, Glu335, and 364-367 (GGDS).

This sequence belongs to the phosphoglycerate kinase family. Monomer.

The protein localises to the cytoplasm. It catalyses the reaction (2R)-3-phosphoglycerate + ATP = (2R)-3-phospho-glyceroyl phosphate + ADP. Its pathway is carbohydrate degradation; glycolysis; pyruvate from D-glyceraldehyde 3-phosphate: step 2/5. In Mycolicibacterium smegmatis (strain ATCC 700084 / mc(2)155) (Mycobacterium smegmatis), this protein is Phosphoglycerate kinase.